Reading from the N-terminus, the 515-residue chain is Elongation factor 1-alpha S (515 aa).

Residues 5-258 form the tr-type G domain; sequence KTHINLVVIG…DAMKPPKRPT (254 aa). The interval 14-21 is G1; the sequence is GHVDAGKS. 14 to 21 serves as a coordination point for GTP; it reads GHVDAGKS. N6,N6-dimethyllysine is present on Lys-55. Residues 70–74 form a G2 region; it reads GITID. Lys-79 is subject to N6,N6,N6-trimethyllysine. Residues 91-94 form a G3 region; the sequence is DAPG. Residues 91–95 and 151–154 each bind GTP; these read DAPGH and NKMD. The interval 151-154 is G4; that stretch reads NKMD. The segment at 187–206 is disordered; that stretch reads KKDKGDKKKGDKKEKKDKKD. A compositionally biased stretch (basic and acidic residues) spans 189 to 206; that stretch reads DKGDKKKGDKKEKKDKKD. Residues 222-224 form a G5 region; that stretch reads SGW. At Lys-289 the chain carries N6-methyllysine. At Lys-334 the chain carries N6,N6,N6-trimethyllysine. The disordered stretch occupies residues 396–419; it reads KRGKQTHDVSDDTEWATKDDAEPR. Positions 398-419 are enriched in basic and acidic residues; the sequence is GKQTHDVSDDTEWATKDDAEPR. Lys-441 bears the N6,N6,N6-trimethyllysine mark.

Belongs to the TRAFAC class translation factor GTPase superfamily. Classic translation factor GTPase family. EF-Tu/EF-1A subfamily.

It is found in the cytoplasm. This protein promotes the GTP-dependent binding of aminoacyl-tRNA to the A-site of ribosomes during protein biosynthesis. The chain is Elongation factor 1-alpha S (TEF-S) from Porphyra purpurea (Red seaweed).